The primary structure comprises 245 residues: MADS-box transcription factor 55 (245 aa).

Residues 1–61 (MARERREIRR…GKLSQFASSN (61 aa)) enclose the MADS-box domain. The K-box domain occupies 109–199 (LQLEHSKCSS…RDQMPQVPTA (91 aa)). The segment at 197-245 (PTAGLAVPDTENVLTEDGQSSESVMTALNSGSSQDNDDGSDISLKLGLP) is disordered. The segment covering 213 to 224 (DGQSSESVMTAL) has biased composition (polar residues).

Expressed in roots, shoots and developing panicles. Expressed in shoots.

It is found in the nucleus. In terms of biological role, transcription factor that acts as a negative regulator of brassinosteroid signaling. The polypeptide is MADS-box transcription factor 55 (MADS55) (Oryza sativa subsp. japonica (Rice)).